The primary structure comprises 1758 residues: Y' element ATP-dependent helicase YJL225C (1758 aa).

Residues 668 to 845 (EIYMADTPSV…LQRIGLTGLA (178 aa)) enclose the Helicase ATP-binding domain. 681–688 (APPGYGKT) is a binding site for ATP. A Helicase C-terminal domain is found at 900–1051 (ALKLLLALFE…EFYGLESKKG (152 aa)). Low complexity predominate over residues 1142–1360 (NVRTNATTNA…ATTTESTNAS (219 aa)). The disordered stretch occupies residues 1142–1384 (NVRTNATTNA…RFHPVTDINK (243 aa)). Positions 1361-1384 (AKEDANKDGNAEDNRFHPVTDINK) are enriched in basic and acidic residues.

Belongs to the helicase family. Yeast subtelomeric Y' repeat subfamily.

Its function is as follows. Catalyzes DNA unwinding and is involved in telomerase-independent telomere maintenance. The polypeptide is Y' element ATP-dependent helicase YJL225C (Saccharomyces cerevisiae (strain ATCC 204508 / S288c) (Baker's yeast)).